The primary structure comprises 308 residues: uncharacterized protein (308 aa).

Positions M1 to A18 are cleaved as a signal peptide.

This is an uncharacterized protein from Escherichia coli (strain K12).